The chain runs to 87 residues: UPF0512 protein B (87 aa).

Belongs to the UPF0512 family.

In Dictyostelium discoideum (Social amoeba), this protein is UPF0512 protein B.